Here is a 328-residue protein sequence, read N- to C-terminus: DNA-directed RNA polymerase subunit alpha (328 aa).

An alpha N-terminal domain (alpha-NTD) region spans residues 1–231 (MIYQMQMPAK…EHVTFFADFS (231 aa)). Residues 252-328 (MRKLFNTKIE…MDITKYQMKG (77 aa)) are alpha C-terminal domain (alpha-CTD).

It belongs to the RNA polymerase alpha chain family. Homodimer. The RNAP catalytic core consists of 2 alpha, 1 beta, 1 beta' and 1 omega subunit. When a sigma factor is associated with the core the holoenzyme is formed, which can initiate transcription.

The enzyme catalyses RNA(n) + a ribonucleoside 5'-triphosphate = RNA(n+1) + diphosphate. Functionally, DNA-dependent RNA polymerase catalyzes the transcription of DNA into RNA using the four ribonucleoside triphosphates as substrates. The chain is DNA-directed RNA polymerase subunit alpha from Chlorobium limicola (strain DSM 245 / NBRC 103803 / 6330).